A 956-amino-acid chain; its full sequence is RNA-binding protein 44 (956 aa).

The interval 301–321 (DNTQNNQNQSYNPTEENDHNV) is disordered. Positions 750–824 (SLLCITCLPG…HAVQVVHLSG (75 aa)) constitute an RRM domain. Residues 831 to 855 (KPSDLSHSASESHKEDTAGDELRTK) are disordered. Residues 840–854 (SESHKEDTAGDELRT) are compositionally biased toward basic and acidic residues.

The protein localises to the cytoplasm. Functionally, component of intercellular bridges during meiosis. Intercellular bridges are evolutionarily conserved structures that connect differentiating germ cells. Not required for fertility. The sequence is that of RNA-binding protein 44 (rbm44) from Danio rerio (Zebrafish).